The following is a 436-amino-acid chain: Acetylcholine receptor non-alpha chain (436 aa).

Residues 1-195 (IIDVHEIDQI…IFYLELRRKP (195 aa)) are Extracellular-facing. Residue asparagine 62 is glycosylated (N-linked (GlcNAc...) asparagine). Cysteines 89 and 103 form a disulfide. Asparagine 140 carries N-linked (GlcNAc...) asparagine glycosylation. 3 helical membrane-spanning segments follow: residues 196–219 (LFYTVNLVFPCVGISFLTIVAFYL), 227–245 (VTLCILILVALTVFYLLLK), and 261–280 (YLLFTMIMVSLSVLVTVISL). The Cytoplasmic segment spans residues 281–404 (NLHFRRPSTH…WKFVARVLDR (124 aa)). Residues 405–423 (LFLLLFSIACFLGTILILF) traverse the membrane as a helical segment.

This sequence belongs to the ligand-gated ion channel (TC 1.A.9) family. Acetylcholine receptor (TC 1.A.9.1) subfamily.

It localises to the postsynaptic cell membrane. The protein localises to the cell membrane. Functionally, after binding acetylcholine, the AChR responds by an extensive change in conformation that affects all subunits and leads to opening of an ion-conducting channel across the plasma membrane. This chain is Acetylcholine receptor non-alpha chain, found in Onchocerca volvulus.